The chain runs to 181 residues: UPF0397 protein SUB0313 (181 aa).

A run of 5 helical transmembrane segments spans residues 11–31 (AIGI…ITIF), 45–65 (LFSV…GHML), 69–89 (FAGY…GLGI), 114–134 (VQAL…DILI), and 147–167 (LFAA…LLIA).

It belongs to the UPF0397 family.

The protein localises to the cell membrane. The polypeptide is UPF0397 protein SUB0313 (Streptococcus uberis (strain ATCC BAA-854 / 0140J)).